Reading from the N-terminus, the 72-residue chain is UPF0270 protein ETA_31870 (72 aa).

Belongs to the UPF0270 family.

This Erwinia tasmaniensis (strain DSM 17950 / CFBP 7177 / CIP 109463 / NCPPB 4357 / Et1/99) protein is UPF0270 protein ETA_31870.